Here is a 196-residue protein sequence, read N- to C-terminus: Potassium-transporting ATPase KdpC subunit (196 aa).

A helical membrane pass occupies residues 7–27; the sequence is PALVLFFVLTLLTGVAYPLAV.

The protein belongs to the KdpC family. As to quaternary structure, the system is composed of three essential subunits: KdpA, KdpB and KdpC.

It localises to the cell inner membrane. Functionally, part of the high-affinity ATP-driven potassium transport (or Kdp) system, which catalyzes the hydrolysis of ATP coupled with the electrogenic transport of potassium into the cytoplasm. This subunit acts as a catalytic chaperone that increases the ATP-binding affinity of the ATP-hydrolyzing subunit KdpB by the formation of a transient KdpB/KdpC/ATP ternary complex. This Polaromonas naphthalenivorans (strain CJ2) protein is Potassium-transporting ATPase KdpC subunit.